We begin with the raw amino-acid sequence, 95 residues long: IgNAR transmembrane form NE (95 aa).

One can recognise an Ig-like domain in the interval 1 to 36; sequence LTFSTRSLLNLPAVEWKSGAKYTCTASHSPSQSTVK. A compositionally biased stretch (polar residues) spans 24 to 35; that stretch reads CTASHSPSQSTV. Positions 24-79 are disordered; it reads CTASHSPSQSTVKRVIRNPKESPKGSSETRKSPLEIMESPEDYGTEEDQLENVNED. Residues 41-56 are compositionally biased toward basic and acidic residues; it reads NPKESPKGSSETRKSP. Residues 61–77 are compositionally biased toward acidic residues; it reads ESPEDYGTEEDQLENVN. Residue asparagine 81 is glycosylated (N-linked (GlcNAc...) asparagine).

Expressed mainly in lymphoid tissues including spleen, epigonal organ and circulating lymphocytes. Also expressed at low levels in the pancreas.

The protein is IgNAR transmembrane form NE of Ginglymostoma cirratum (Nurse shark).